Consider the following 148-residue polypeptide: Oleosin 16 kDa (148 aa).

Residues 1–21 form a disordered region; that stretch reads MADQHRGVIGGGGYGDRGGQE. At A2 the chain carries N-acetylalanine. The tract at residues 2–34 is polar; that stretch reads ADQHRGVIGGGGYGDRGGQEQQEKQPFMMTALK. The span at 8–17 shows a compositional bias: gly residues; sequence VIGGGGYGDR. The interval 35–106 is hydrophobic; that stretch reads TVTAATAGGS…AALSVFSWMY (72 aa). 3 consecutive transmembrane segments (helical) span residues 43–63, 66–86, and 87–107; these read GSML…LTVA, VLVI…LMAA, and GFVT…WMYK.

Belongs to the oleosin family.

It is found in the lipid droplet. The protein localises to the membrane. In terms of biological role, may have a structural role to stabilize the lipid body during desiccation of the seed by preventing coalescence of the oil. Probably interacts with both lipid and phospholipid moieties of lipid bodies. May also provide recognition signals for specific lipase anchorage in lipolysis during seedling growth. This chain is Oleosin 16 kDa (OLE16), found in Oryza sativa subsp. japonica (Rice).